Reading from the N-terminus, the 527-residue chain is Phospholipase A1-Igamma3, chloroplastic (527 aa).

The transit peptide at 1–52 directs the protein to the chloroplast; it reads MASLSLPITLKNPRFFSSSPQNIFKTQPQTLVLTTKFKTCSIICSSSCTSIS. A compositionally biased stretch (low complexity) spans 55 to 65; sequence TTQQKQSNKQT. Residues 55–82 form a disordered region; sequence TTQQKQSNKQTHVSDNKREEKAEEEEEE. The span at 66–75 shows a compositional bias: basic and acidic residues; it reads HVSDNKREEK. The GXSXG signature appears at 300–304; it reads GHSLG. Ser-302 acts as the Acyl-ester intermediate in catalysis. Residues Asp-366 and His-423 each act as charge relay system in the active site.

Belongs to the AB hydrolase superfamily. Lipase family. Highly expressed in flowers. Lower levels in seedlings, leaves and stems.

It is found in the plastid. Its subcellular location is the chloroplast. It carries out the reaction 1,2-dihexadecanoyl-sn-glycero-3-phosphocholine + H2O = 2-hexadecanoyl-sn-glycero-3-phosphocholine + hexadecanoate + H(+). It catalyses the reaction a 1,2-diacyl-3-O-(beta-D-galactosyl)-sn-glycerol + H2O = an acyl-3-O-(beta-D-galactosyl)-sn-glycerol + a fatty acid + H(+). The enzyme catalyses a 1,2-diacyl-3-O-[alpha-D-galactosyl-(1-&gt;6)-beta-D-galactosyl]-sn-glycerol + H2O = acyl-3-O-[alpha-D-galactosyl-(1-&gt;6)-beta-D-galactosyl]-sn-glycerol + a fatty acid + H(+). Acylhydrolase that catalyzes the hydrolysis of phosphatidylcholine at the sn-1 position. Moderate activity toward phosphatidylcholine (PC), monogalactosyldiacylglycerol (MGDG), digalactosyldiacylglycerol (DGDG) and triacylglycerol (TAG). This chain is Phospholipase A1-Igamma3, chloroplastic, found in Arabidopsis thaliana (Mouse-ear cress).